Here is a 701-residue protein sequence, read N- to C-terminus: Protein SOSEKI 1 (701 aa).

Positions 8–101 are DIX-like oligomerization domain; sequence LSAQVLYQLS…YVLRASELID (94 aa). 4 disordered regions span residues 238 to 262, 300 to 329, 366 to 389, and 538 to 575; these read STVH…FSPG, LPPN…SLNE, PYNT…YRTK, and IASS…LASP. The segment covering 306–319 has biased composition (basic and acidic residues); the sequence is STHEDNSFWRDSRS. The C2HC/C3H-type zinc-finger motif lies at 658 to 687; sequence ILQECSICRRTFKPDSLQVHMRGCHPPQYA. The Zn(2+) site is built by Cys-662, Cys-665, His-677, and Cys-681.

The protein belongs to the SOSEKI family. As to quaternary structure, homodimer. Forms long polymer filaments with other SOKs proteins polymers crucial for polar localization and biological activity. Zn(2+) is required as a cofactor.

It is found in the cell membrane. In terms of biological role, SOSEKI proteins locally interpret global polarity cues and can influence cell division orientation to coordinate cell polarization relative to body axes. The chain is Protein SOSEKI 1 from Physcomitrium patens (Spreading-leaved earth moss).